Consider the following 153-residue polypeptide: Large ribosomal subunit protein uL15 (153 aa).

Residues 21-41 form a disordered region; sequence RGIGSGKGKTGGRGIKGQKSR. Over residues 23 to 35 the composition is skewed to gly residues; that stretch reads IGSGKGKTGGRGI.

It belongs to the universal ribosomal protein uL15 family. Part of the 50S ribosomal subunit.

Functionally, binds to the 23S rRNA. This Rickettsia felis (strain ATCC VR-1525 / URRWXCal2) (Rickettsia azadi) protein is Large ribosomal subunit protein uL15.